Reading from the N-terminus, the 499-residue chain is Terpentedienyl-diphosphate synthase (499 aa).

Positions 284 and 286 each coordinate Mg(2+). A DXDD motif motif is present at residues 284 to 287 (DGDD).

It belongs to the terpene synthase family. In terms of assembly, monomer. The cofactor is Mg(2+).

It carries out the reaction (2E,6E,10E)-geranylgeranyl diphosphate = terpentedienyl diphosphate. The protein operates within antibiotic biosynthesis. Its function is as follows. Involved in the production of the isoprenoid antibiotic terpentecin. Converts geranylgeranyl diphosphate (GGDP) into terpentedienol diphosphate (TDP) by a protonation-initiated cyclization. This chain is Terpentedienyl-diphosphate synthase (cyc1), found in Kitasatospora griseola (Streptomyces griseolosporeus).